Reading from the N-terminus, the 262-residue chain is uncharacterized protein (262 aa).

In terms of domain architecture, S4 RNA-binding spans 6 to 70; it reads LRINQFLAHY…LKNKKFSVLV (65 aa). Asp-108 serves as the catalytic Nucleophile.

Belongs to the pseudouridine synthase RsuA family.

It catalyses the reaction a uridine in RNA = a pseudouridine in RNA. This is an uncharacterized protein from Helicobacter pylori (strain ATCC 700392 / 26695) (Campylobacter pylori).